A 545-amino-acid chain; its full sequence is Probable acyl-activating enzyme 4 (545 aa).

The protein belongs to the ATP-dependent AMP-binding enzyme family. Expressed in roots, leaves, stems, flowers and developing seeds.

May act as an acid--thiol ligase that activates carboxylic acids by forming acyl-CoAs. This chain is Probable acyl-activating enzyme 4 (AEE4), found in Arabidopsis thaliana (Mouse-ear cress).